Consider the following 306-residue polypeptide: Phenylcoumaran benzylic ether reductase IRL1 (306 aa).

Residues 10–16 (GATGYIG), Arg35, and Lys44 each bind NADP(+). Lys132 acts as the Proton acceptor in catalysis. Arg136 serves as a coordination point for NADP(+).

It belongs to the NmrA-type oxidoreductase family. Isoflavone reductase subfamily. Highly expressed in sclerotesta. Expressed in roots, and two-to-four year stems.

It carries out the reaction (-)-dehydrodiconiferyl alcohol + NADPH + H(+) = (S)-isodihydrodehydrodiconiferyl alcohol + NADP(+). It catalyses the reaction (+)-dehydrodiconiferyl alcohol + NADPH + H(+) = (R)-isodihydrodehydrodiconiferyl alcohol + NADP(+). The enzyme catalyses (2R,3S)-dihydrodehydrodiconiferyl alcohol + NADPH + H(+) = (S)-tetrahydrodehydrodiconiferyl alcohol + NADP(+). The catalysed reaction is (2S,3R)-dihydrodehydrodiconiferyl alcohol + NADPH + H(+) = (R)-tetrahydrodehydrodiconiferyl alcohol + NADP(+). Functionally, oxidoreductase involved in lignan biosynthesis. Catalyzes the NADPH-dependent reduction of phenylcoumaran benzylic ethers. Converts dehydrodiconiferyl alcohol (DDC) to isodihydrodehydrodiconiferyl alcohol (IDDDC), and dihydrodehydrodiconiferyl alcohol (DDDC) to tetrahydrodehydrodiconiferyl alcohol (TDDC). May regulate changes in lignin content and accumulation of flavonoids. In Ginkgo biloba (Ginkgo), this protein is Phenylcoumaran benzylic ether reductase IRL1.